Here is a 330-residue protein sequence, read N- to C-terminus: MGKIDVDKILFFNQEIRLWQLIMATPEENSNPHDRATPQLPAQLQELEHRVARRRLSQARHRATLAALFNNLRKTVYSQSDLIASKWQVLNKAKSHIPELEQTLDNLLKLKASFNLEDGHASSLEEVKKEYASMYSGNDSFPQNGSSPWYLNFYKQTMDLLTGSGIITPQEAALPIVSAAISHLWQNLSEERKASLRQAWAQKHRGPATLAEACREPACAEGSVKDSGVDSQGASCSLVSTPEEILFEDAFDVASFLDKSEVPSTSSSSSVLASCNPENPEEKFQLYMQIINFFKGLSCANTQVKQEASFPVDEEMIMLQCTETFDDEDL.

Positions 50-55 (RVARRR) match the Nuclear localization signal (NLS) motif. A coiled-coil region spans residues 88–112 (QVLNKAKSHIPELEQTLDNLLKLKA).

Interacts with XPO1. Interacts with MEIOSIN. Phosphorylated. Expressed specifically in testis and fetal ovaries.

Its subcellular location is the cytoplasm. The protein resides in the nucleus. Functionally, meiosis-inducer required for the transition into meiosis for both female and male germ cells. In female germ cells, acts downstream of ZGLP1 as a key effector of the meiotic program: required for premeiotic DNA replication and subsequent events in meiotic prophase. During spermatogenesis, next to its role in meiotic initiation, promotes (but is not required for) spermatogonial differentiation. In complex with MEIOSIN, directly activates the transcription of a subset of critical meiotic genes playing a central role in cell-cycle switching from mitosis to meiosis. This is Stimulated by retinoic acid gene 8 protein homolog from Homo sapiens (Human).